Here is a 174-residue protein sequence, read N- to C-terminus: Protein C2-DOMAIN ABA-RELATED 2 (174 aa).

At Met-1 the chain carries N-acetylmethionine. A C2 domain is found at 1–104 (MENMLGLLRL…EAIRIQNQLG (104 aa)). Ca(2+) contacts are provided by Arg-21, Asp-22, Asp-27, Asp-73, Arg-74, Asp-75, and Asp-81.

Belongs to the plant CAR protein family. As to quaternary structure, binds to PYR/PYL/RCAR abscisic acid intracellular receptors in an ABA-independent manner, both at the plasma membrane and in the nucleus. The cofactor is Ca(2+).

The protein resides in the cell membrane. Its subcellular location is the nucleus. Stimulates the GTPase/ATPase activities of Obg-like ATPases. Mediates the transient calcium-dependent interaction of PYR/PYL/RCAR abscisic acid (ABA) receptors with the plasma membrane and thus regulates ABA sensitivity. The chain is Protein C2-DOMAIN ABA-RELATED 2 from Arabidopsis thaliana (Mouse-ear cress).